A 490-amino-acid chain; its full sequence is Probable cytosol aminopeptidase (490 aa).

The Mn(2+) site is built by lysine 262 and aspartate 267. Lysine 274 is a catalytic residue. Mn(2+)-binding residues include aspartate 285, aspartate 344, and glutamate 346. Arginine 348 is an active-site residue.

It belongs to the peptidase M17 family. Requires Mn(2+) as cofactor.

Its subcellular location is the cytoplasm. It carries out the reaction Release of an N-terminal amino acid, Xaa-|-Yaa-, in which Xaa is preferably Leu, but may be other amino acids including Pro although not Arg or Lys, and Yaa may be Pro. Amino acid amides and methyl esters are also readily hydrolyzed, but rates on arylamides are exceedingly low.. The catalysed reaction is Release of an N-terminal amino acid, preferentially leucine, but not glutamic or aspartic acids.. In terms of biological role, presumably involved in the processing and regular turnover of intracellular proteins. Catalyzes the removal of unsubstituted N-terminal amino acids from various peptides. This is Probable cytosol aminopeptidase from Mannheimia succiniciproducens (strain KCTC 0769BP / MBEL55E).